Consider the following 345-residue polypeptide: MSDIPFTLDQLRILKAIASEGSFKRAADTLYVSQPAVSLQVQNLEKQLSVPLFDRGGRKAQLTEAGHLLLNYGEKIITLCQETCRAIEDLQNLQGGTLIVGASQTTGTYLLPRMIGMFRQQYPDVTVQLQVHSTRRTAWGVANGQVDLAIIGGEVPAELQETLTVLPYAEDELALILPVLHPLAQAETIQKEDLYKLKFISLDSQSTIRKVIDKVLSQGEIDTKRLKIEMELNSIEAIKNAVQSGLGAAFVSTTAIEKELEMNVLHIAPIKNVEIRRVLSVIINPNRYRSKASAAFIREVLPQFSTHPDALDPERLFANPYSSNNGDRQGDGKDGKGSIEIDSVT.

Residues Phe-6–Thr-63 form the HTH lysR-type domain. A DNA-binding region (H-T-H motif) is located at residues Phe-23 to Gln-42. Residues Leu-311–Thr-345 form a disordered region. The span at Arg-328–Ile-339 shows a compositional bias: basic and acidic residues.

Belongs to the LysR transcriptional regulatory family.

Its function is as follows. Trans-acting transcriptional regulator of RuBisCO genes (rbcL and rbcS) expression. The polypeptide is Probable RuBisCO transcriptional regulator (rbcR) (Synechocystis sp. (strain ATCC 27184 / PCC 6803 / Kazusa)).